The primary structure comprises 129 residues: Succinate dehydrogenase assembly factor 3, mitochondrial (129 aa).

A mitochondrion-targeting transit peptide spans 1 to 21 (MQVNHLLRQAVKQTTRAGRLG).

It belongs to the complex I LYR family. SDHAF3 subfamily. In terms of assembly, interacts with the iron-sulfur protein subunit within the SDH catalytic dimer.

The protein resides in the mitochondrion matrix. Plays an essential role in the assembly of succinate dehydrogenase (SDH), an enzyme complex (also referred to as respiratory complex II) that is a component of both the tricarboxylic acid (TCA) cycle and the mitochondrial electron transport chain, and which couples the oxidation of succinate to fumarate with the reduction of ubiquinone (coenzyme Q) to ubiquinol. Promotes maturation of the iron-sulfur protein subunit of the SDH catalytic dimer, protecting it from the deleterious effects of oxidants. May act together with SDHAF1. The chain is Succinate dehydrogenase assembly factor 3, mitochondrial from Kluyveromyces lactis (strain ATCC 8585 / CBS 2359 / DSM 70799 / NBRC 1267 / NRRL Y-1140 / WM37) (Yeast).